A 100-amino-acid polypeptide reads, in one-letter code: Small ribosomal subunit protein bS18c (100 aa).

A compositionally biased stretch (basic residues) spans 1–19 (MDKSKRPFRKSKRSFRRRL). Positions 1-23 (MDKSKRPFRKSKRSFRRRLPPIG) are disordered.

This sequence belongs to the bacterial ribosomal protein bS18 family. Part of the 30S ribosomal subunit.

It is found in the plastid. The protein resides in the chloroplast. The polypeptide is Small ribosomal subunit protein bS18c (Calycanthus floridus var. glaucus (Eastern sweetshrub)).